A 266-amino-acid polypeptide reads, in one-letter code: Uridylate kinase (266 aa).

Residue 26–29 coordinates ATP; sequence KLGG. Residue Gly67 participates in UMP binding. Positions 68 and 72 each coordinate ATP. UMP contacts are provided by residues Asp87 and 148 to 155; that span reads LGAPYFST. ATP is bound by residues Tyr181 and Asp184.

It belongs to the UMP kinase family. Homohexamer.

The protein resides in the cytoplasm. The enzyme catalyses UMP + ATP = UDP + ADP. It participates in pyrimidine metabolism; CTP biosynthesis via de novo pathway; UDP from UMP (UMPK route): step 1/1. Its activity is regulated as follows. Inhibited by UTP. Catalyzes the reversible phosphorylation of UMP to UDP. This Acidothermus cellulolyticus (strain ATCC 43068 / DSM 8971 / 11B) protein is Uridylate kinase.